The following is a 638-amino-acid chain: 1-deoxy-D-xylulose-5-phosphate synthase (638 aa).

Residues His79 and 120–122 contribute to the thiamine diphosphate site; that span reads AHS. Asp151 is a Mg(2+) binding site. Thiamine diphosphate is bound by residues 152–153, Asn180, Tyr289, and Glu371; that span reads GA. Residue Asn180 coordinates Mg(2+).

It belongs to the transketolase family. DXPS subfamily. Homodimer. Mg(2+) is required as a cofactor. The cofactor is thiamine diphosphate.

It carries out the reaction D-glyceraldehyde 3-phosphate + pyruvate + H(+) = 1-deoxy-D-xylulose 5-phosphate + CO2. Its pathway is metabolic intermediate biosynthesis; 1-deoxy-D-xylulose 5-phosphate biosynthesis; 1-deoxy-D-xylulose 5-phosphate from D-glyceraldehyde 3-phosphate and pyruvate: step 1/1. Its function is as follows. Catalyzes the acyloin condensation reaction between C atoms 2 and 3 of pyruvate and glyceraldehyde 3-phosphate to yield 1-deoxy-D-xylulose-5-phosphate (DXP). The sequence is that of 1-deoxy-D-xylulose-5-phosphate synthase from Rhizobium etli (strain ATCC 51251 / DSM 11541 / JCM 21823 / NBRC 15573 / CFN 42).